The sequence spans 410 residues: Testis-specific Y-encoded-like protein 6 (410 aa).

Disordered regions lie at residues methionine 1–lysine 31 and proline 46–histidine 69. Phosphoserine is present on serine 9. Positions glutamate 18–lysine 31 are enriched in basic and acidic residues.

It belongs to the nucleosome assembly protein (NAP) family.

The polypeptide is Testis-specific Y-encoded-like protein 6 (TSPYL6) (Homo sapiens (Human)).